We begin with the raw amino-acid sequence, 420 residues long: MKRSGKIFTTAMLAVTLMMPAMGVSANEGNAAAEGNEKFRVLVDSVDQKNLKNAKQQYGVHWDFAGEGFTTDMNEKQFNALKKNKNLTVEKVPELEIATATDKPEALYNAMAASQSTPWGIKAIYNNSSITQTSGGGGINIAVLDTGVNTNHPDLRNNVEQCKDFTVGTTYTNNSCTDRQGHGTHVAGSALADGGTGNGVYGVAPDADLWAYKVLGDDGSGYADDIAAAIRHAGDQATALNTKVVINMSLGSSGESSLITNAVNYSYNKGVLIIAAAGNSGPYQGSIGYPGALVNAVAVAALENKVENGTYRVADFSSRGYSWTDGDYAIQKGDVEISAPGAAIYSTWFDGGYATISGTSMASPHAAGLAAKIWAQYPSASNVDVRGELQYRAYENDILSGYYAGYGDDFASGFGFATVQ.

An N-terminal signal peptide occupies residues 1-31 (MKRSGKIFTTAMLAVTLMMPAMGVSANEGNA). Residues 32–111 (AAEGNEKFRV…DKPEALYNAM (80 aa)) constitute a propeptide that is removed on maturation. Glutamine 115 contacts Ca(2+). The region spanning 118 to 420 (PWGIKAIYNN…ASGFGFATVQ (303 aa)) is the Peptidase S8 domain. The active-site Charge relay system is the aspartate 145. A Ca(2+)-binding site is contributed by aspartate 154. Residues histidine 182 and serine 360 each act as charge relay system in the active site.

Belongs to the peptidase S8 family. Ca(2+) serves as cofactor.

Its subcellular location is the secreted. The enzyme catalyses Hydrolysis of proteins with broad specificity for peptide bonds, and a preference for a large uncharged residue in P1. Hydrolyzes peptide amides.. Subtilisin is an extracellular alkaline serine protease, it catalyzes the hydrolysis of proteins and peptide amides. This is Subtilisin (sub1) from Bacillus sp. (strain TA39).